The chain runs to 454 residues: Phenylalanine--tRNA ligase, mitochondrial (454 aa).

Substrate is bound by residues 141 to 144, Arg-163, 170 to 172, 177 to 179, Glu-266, and Phe-291; these read SAHQ, VHY, and QME. Residues 327 to 347 are disordered; sequence KSISTSSSSSSSSSSSSSSTL. Residues 328–347 are compositionally biased toward low complexity; it reads SISTSSSSSSSSSSSSSSTL. An FDX-ACB domain is found at 361 to 454; it reads SKYPSCFKDV…LENHLSVKLR (94 aa).

It belongs to the class-II aminoacyl-tRNA synthetase family. Monomer.

The protein resides in the mitochondrion matrix. It catalyses the reaction tRNA(Phe) + L-phenylalanine + ATP = L-phenylalanyl-tRNA(Phe) + AMP + diphosphate + H(+). Functionally, is responsible for the charging of tRNA(Phe) with phenylalanine in mitochondrial translation. The chain is Phenylalanine--tRNA ligase, mitochondrial (mpheS) from Dictyostelium discoideum (Social amoeba).